A 252-amino-acid chain; its full sequence is Probable transcriptional regulatory protein Fnod_1106 (252 aa).

Belongs to the TACO1 family.

The protein localises to the cytoplasm. In Fervidobacterium nodosum (strain ATCC 35602 / DSM 5306 / Rt17-B1), this protein is Probable transcriptional regulatory protein Fnod_1106.